The sequence spans 715 residues: DNA ligase (715 aa).

NAD(+)-binding positions include 47 to 51, 96 to 97, and Glu129; these read DADYD and SL. Catalysis depends on Lys131, which acts as the N6-AMP-lysine intermediate. Arg152, Glu189, Lys306, and Lys330 together coordinate NAD(+). Zn(2+)-binding residues include Cys435, Cys438, Cys453, and Cys459. One can recognise a BRCT domain in the interval 637-715; that stretch reads KRDSAVAGKT…EDEWLALIQG (79 aa).

It belongs to the NAD-dependent DNA ligase family. LigA subfamily. The cofactor is Mg(2+). Mn(2+) is required as a cofactor.

The catalysed reaction is NAD(+) + (deoxyribonucleotide)n-3'-hydroxyl + 5'-phospho-(deoxyribonucleotide)m = (deoxyribonucleotide)n+m + AMP + beta-nicotinamide D-nucleotide.. Functionally, DNA ligase that catalyzes the formation of phosphodiester linkages between 5'-phosphoryl and 3'-hydroxyl groups in double-stranded DNA using NAD as a coenzyme and as the energy source for the reaction. It is essential for DNA replication and repair of damaged DNA. The chain is DNA ligase from Rhodopseudomonas palustris (strain BisA53).